A 141-amino-acid chain; its full sequence is Large ribosomal subunit protein uL11 (141 aa).

This sequence belongs to the universal ribosomal protein uL11 family. In terms of assembly, part of the ribosomal stalk of the 50S ribosomal subunit. Interacts with L10 and the large rRNA to form the base of the stalk. L10 forms an elongated spine to which L12 dimers bind in a sequential fashion forming a multimeric L10(L12)X complex. In terms of processing, one or more lysine residues are methylated.

Its function is as follows. Forms part of the ribosomal stalk which helps the ribosome interact with GTP-bound translation factors. In Streptococcus pneumoniae (strain Hungary19A-6), this protein is Large ribosomal subunit protein uL11.